A 411-amino-acid polypeptide reads, in one-letter code: Argininosuccinate lyase (411 aa).

It belongs to the lyase 1 family. Argininosuccinate lyase subfamily.

The protein localises to the cytoplasm. It carries out the reaction 2-(N(omega)-L-arginino)succinate = fumarate + L-arginine. It functions in the pathway amino-acid biosynthesis; L-arginine biosynthesis; L-arginine from L-ornithine and carbamoyl phosphate: step 3/3. The polypeptide is Argininosuccinate lyase (Legionella pneumophila subsp. pneumophila (strain Philadelphia 1 / ATCC 33152 / DSM 7513)).